The primary structure comprises 79 residues: Transcriptional regulator SplA (79 aa).

In terms of biological role, regulator of the spore photoproduct lyase operon (splAB). This Bacillus subtilis (strain 168) protein is Transcriptional regulator SplA (splA).